Here is a 34-residue protein sequence, read N- to C-terminus: Cytochrome b6-f complex subunit 8 (34 aa).

A helical membrane pass occupies residues 3–23 (LLTFGWAALLAVFTFSLAMVV).

The protein belongs to the PetN family. As to quaternary structure, the 4 large subunits of the cytochrome b6-f complex are cytochrome b6, subunit IV (17 kDa polypeptide, PetD), cytochrome f and the Rieske protein, while the 4 small subunits are PetG, PetL, PetM and PetN. The complex functions as a dimer.

Its subcellular location is the cellular thylakoid membrane. Functionally, component of the cytochrome b6-f complex, which mediates electron transfer between photosystem II (PSII) and photosystem I (PSI), cyclic electron flow around PSI, and state transitions. The chain is Cytochrome b6-f complex subunit 8 from Synechococcus elongatus (strain ATCC 33912 / PCC 7942 / FACHB-805) (Anacystis nidulans R2).